Consider the following 400-residue polypeptide: Phosphoglycerate kinase (400 aa).

Substrate-binding positions include 19 to 21 (DLN), Arg-38, 61 to 64 (HLGR), Arg-124, and Arg-161. ATP is bound by residues Lys-211, Gly-299, Glu-330, and 356-359 (GGDS).

Belongs to the phosphoglycerate kinase family. Monomer.

Its subcellular location is the cytoplasm. It carries out the reaction (2R)-3-phosphoglycerate + ATP = (2R)-3-phospho-glyceroyl phosphate + ADP. Its pathway is carbohydrate degradation; glycolysis; pyruvate from D-glyceraldehyde 3-phosphate: step 2/5. The protein is Phosphoglycerate kinase of Frankia casuarinae (strain DSM 45818 / CECT 9043 / HFP020203 / CcI3).